We begin with the raw amino-acid sequence, 118 residues long: Large ribosomal subunit protein bL20 (118 aa).

It belongs to the bacterial ribosomal protein bL20 family.

In terms of biological role, binds directly to 23S ribosomal RNA and is necessary for the in vitro assembly process of the 50S ribosomal subunit. It is not involved in the protein synthesizing functions of that subunit. The sequence is that of Large ribosomal subunit protein bL20 from Ralstonia nicotianae (strain ATCC BAA-1114 / GMI1000) (Ralstonia solanacearum).